A 316-amino-acid chain; its full sequence is Transaldolase (316 aa).

The Schiff-base intermediate with substrate role is filled by Lys-131.

Belongs to the transaldolase family. Type 1 subfamily. As to quaternary structure, homodimer.

It is found in the cytoplasm. It carries out the reaction D-sedoheptulose 7-phosphate + D-glyceraldehyde 3-phosphate = D-erythrose 4-phosphate + beta-D-fructose 6-phosphate. It participates in carbohydrate degradation; pentose phosphate pathway; D-glyceraldehyde 3-phosphate and beta-D-fructose 6-phosphate from D-ribose 5-phosphate and D-xylulose 5-phosphate (non-oxidative stage): step 2/3. Transaldolase is important for the balance of metabolites in the pentose-phosphate pathway. The sequence is that of Transaldolase from Buchnera aphidicola subsp. Baizongia pistaciae (strain Bp).